Reading from the N-terminus, the 177-residue chain is Large ribosomal subunit protein uL6 (177 aa).

It belongs to the universal ribosomal protein uL6 family. In terms of assembly, part of the 50S ribosomal subunit.

This protein binds to the 23S rRNA, and is important in its secondary structure. It is located near the subunit interface in the base of the L7/L12 stalk, and near the tRNA binding site of the peptidyltransferase center. The polypeptide is Large ribosomal subunit protein uL6 (Methylobacterium sp. (strain 4-46)).